We begin with the raw amino-acid sequence, 325 residues long: ATP phosphoribosyltransferase (325 aa).

Belongs to the ATP phosphoribosyltransferase family. Long subfamily. Mg(2+) is required as a cofactor.

It is found in the cytoplasm. The enzyme catalyses 1-(5-phospho-beta-D-ribosyl)-ATP + diphosphate = 5-phospho-alpha-D-ribose 1-diphosphate + ATP. The protein operates within amino-acid biosynthesis; L-histidine biosynthesis; L-histidine from 5-phospho-alpha-D-ribose 1-diphosphate: step 1/9. Feedback inhibited by histidine. Catalyzes the condensation of ATP and 5-phosphoribose 1-diphosphate to form N'-(5'-phosphoribosyl)-ATP (PR-ATP). Has a crucial role in the pathway because the rate of histidine biosynthesis seems to be controlled primarily by regulation of HisG enzymatic activity. The chain is ATP phosphoribosyltransferase from Rhodopseudomonas palustris (strain HaA2).